We begin with the raw amino-acid sequence, 131 residues long: Small ribosomal subunit protein uS8 (131 aa).

It belongs to the universal ribosomal protein uS8 family. In terms of assembly, part of the 30S ribosomal subunit. Contacts proteins S5 and S12.

One of the primary rRNA binding proteins, it binds directly to 16S rRNA central domain where it helps coordinate assembly of the platform of the 30S subunit. This chain is Small ribosomal subunit protein uS8, found in Acinetobacter baylyi (strain ATCC 33305 / BD413 / ADP1).